A 537-amino-acid chain; its full sequence is uncharacterized protein (537 aa).

6 consecutive transmembrane segments (helical) span residues 5 to 25, 40 to 60, 63 to 83, 115 to 135, 149 to 169, and 197 to 217; these read IGLG…PWFV, LAVA…FFGW, VLWV…MAVV, GLYY…HLEG, VYLL…WVTL, and VGIV…ALVI.

It is found in the plastid. The protein resides in the chloroplast membrane. This is an uncharacterized protein from Ostreococcus tauri.